The sequence spans 271 residues: MPELPEVETTRRGIERHVTGRRVTSVIVREPRLRWPVPGDLAERLTGHTLGRVLRRAKYLLIEVDTGLLLLHLGMSGSLRVVTPDAPLRKHDHIDLCLDSGRCLRLHDPRRFGAVLWIEGPAHAHPLLAELGPEPLGKDFDADYLFRSTRKRRVAIKQHIMNSHVVVGVGNIYASEALFLAGIRPGRAAGRLTRAECARLVETIRQVLGEAIAQGGTTLRDFVREDGSHGYFQQHLRVYGRTGLACMACETPVKQIVQGNRSTYYCPACQR.

Pro2 (schiff-base intermediate with DNA) is an active-site residue. Glu3 functions as the Proton donor in the catalytic mechanism. Lys58 functions as the Proton donor; for beta-elimination activity in the catalytic mechanism. The DNA site is built by His91, Arg110, and Arg152. The segment at 237–271 (RVYGRTGLACMACETPVKQIVQGNRSTYYCPACQR) adopts an FPG-type zinc-finger fold. Residue Arg261 is the Proton donor; for delta-elimination activity of the active site.

The protein belongs to the FPG family. Monomer. Zn(2+) is required as a cofactor.

The enzyme catalyses Hydrolysis of DNA containing ring-opened 7-methylguanine residues, releasing 2,6-diamino-4-hydroxy-5-(N-methyl)formamidopyrimidine.. The catalysed reaction is 2'-deoxyribonucleotide-(2'-deoxyribose 5'-phosphate)-2'-deoxyribonucleotide-DNA = a 3'-end 2'-deoxyribonucleotide-(2,3-dehydro-2,3-deoxyribose 5'-phosphate)-DNA + a 5'-end 5'-phospho-2'-deoxyribonucleoside-DNA + H(+). Involved in base excision repair of DNA damaged by oxidation or by mutagenic agents. Acts as a DNA glycosylase that recognizes and removes damaged bases. Has a preference for oxidized purines, such as 7,8-dihydro-8-oxoguanine (8-oxoG). Has AP (apurinic/apyrimidinic) lyase activity and introduces nicks in the DNA strand. Cleaves the DNA backbone by beta-delta elimination to generate a single-strand break at the site of the removed base with both 3'- and 5'-phosphates. The sequence is that of Formamidopyrimidine-DNA glycosylase from Thioalkalivibrio sulfidiphilus (strain HL-EbGR7).